Here is a 113-residue protein sequence, read N- to C-terminus: Dynein light chain Tctex-type 1 (113 aa).

An N-acetylmethionine modification is found at M1. Positions 41–113 (QWTTNVLEQT…CIVSTFGLSI (73 aa)) are interaction with GNB1.

The protein belongs to the dynein light chain Tctex-type family. Homodimer. The cytoplasmic dynein 1 complex consists of two catalytic heavy chains (HCs) and a number of non-catalytic subunits presented by intermediate chains (ICs), light intermediate chains (LICs) and light chains (LCs); the composition seems to vary in respect to the IC, LIC and LC composition. The heavy chain homodimer serves as a scaffold for the probable homodimeric assembly of the respective non-catalytic subunits. The ICs and LICs bind directly to the HC dimer and the LCs assemble on the IC dimer. DYNLT1 and DYNLT3 compete for association with dynein IC (DYNC1I1 or DYNC1I2). Self-associates. Interacts with RHO. Interacts with DYNC1I1 and DYNC1I2. Interacts with DOC2A, DOC2B and SCN10A. Interacts with PVR. Interacts with SVIL isoform 2. Interacts with GNB1; the interaction occurs in presence of guanine nucleotide-binding protein G(T) subunit gamma; the interaction diminishes the association of DYNLT1 with dynein IC (DYNC1I1 or DYNC1I2). Interacts with GNB2, GNB3 and GNB5; the interactions occur in presence of guanine nucleotide-binding protein G(T) subunit gamma. Interacts with ACVR2B and ARHGEF2. Interacts with DNAI4. Interacts with CFAP61. Post-translationally, phosphorylated by BMPR2. The phosphorylation status is proposed to regulate the association with the cytoplasmic dynein complex and may have role in cytoplasmic dynein cargo release. In terms of tissue distribution, high level in testis (germ cell-specific). Expressed in sperm (at protein level). 200-fold lower in liver, brain, heart, spleen, and kidney. Levels in thymus and two embryonal carcinoma cell lines were several-fold higher than this low constitutive level.

It localises to the golgi apparatus. The protein resides in the cytoplasm. It is found in the cytoskeleton. Its subcellular location is the spindle. Acts as one of several non-catalytic accessory components of the cytoplasmic dynein 1 complex that are thought to be involved in linking dynein to cargos and to adapter proteins that regulate dynein function. Cytoplasmic dynein 1 acts as a motor for the intracellular retrograde motility of vesicles and organelles along microtubules. Binds to transport cargos and is involved in apical cargo transport such as rhodopsin-bearing vesicles in polarized epithelia. May also be a accessory component of axonemal dynein. Plays an important role in male germ cell development and function. Candidate for involvement in male sterility. Functionally, plays a role in neuronal morphogenesis; the function is independent of cytoplasmic dynein and seems to be coupled to regulation of the actin cytoskeleton by enhancing Rac1 activity. The function in neurogenesis may be regulated by association with a G-protein beta-gamma dimer. May function as a receptor-independent activator of heterotrimeric G-protein signaling; the activation appears to be independent of a nucleotide exchange. Plays a role in regulating neurogenesis; inhibits the genesis of neurons from precursor cells during cortical development presumably by antagonizing ARHGEF2. Unrelated to the role in retrograde microtubule-associated movement may play a role in the dimerization of cytoplasmic proteins/domains such as for ACVR2B. Binds to the cytoplasmic domain of ACVR2B and, in vitro, inhibits ACVR2B signaling. Involved in the regulation of mitotic spindle orientation. This is Dynein light chain Tctex-type 1 (Dynlt1) from Mus musculus (Mouse).